Here is a 190-residue protein sequence, read N- to C-terminus: MQESFENSVKNILKIIGEDPNREGLLKTPSRVYKAFKFLTSGYEEDPKEVLNDALFTSSNNEMVLMRNIEFYSLCEHHLLPIIGRVHVAYIPNGKVVGLSKIPRMVNIYARRLQIQEQMTEQIAQALAEVIEPKGVGVVVEARHMCVEMRGVQKINSTTTTSALRGCFIKNADTRREFFSLINSPQETHF.

Residues cysteine 75, histidine 78, and cysteine 146 each coordinate Zn(2+).

This sequence belongs to the GTP cyclohydrolase I family. In terms of assembly, toroid-shaped homodecamer, composed of two pentamers of five dimers.

It catalyses the reaction GTP + H2O = 7,8-dihydroneopterin 3'-triphosphate + formate + H(+). The protein operates within cofactor biosynthesis; 7,8-dihydroneopterin triphosphate biosynthesis; 7,8-dihydroneopterin triphosphate from GTP: step 1/1. The chain is GTP cyclohydrolase 1 from Campylobacter curvus (strain 525.92).